Reading from the N-terminus, the 208-residue chain is Outer-membrane lipoprotein carrier protein (208 aa).

A signal peptide spans 1-21 (MPAFRYLIVLPLLCWGFASQA).

Belongs to the LolA family. As to quaternary structure, monomer.

It localises to the periplasm. Its function is as follows. Participates in the translocation of lipoproteins from the inner membrane to the outer membrane. Only forms a complex with a lipoprotein if the residue after the N-terminal Cys is not an aspartate (The Asp acts as a targeting signal to indicate that the lipoprotein should stay in the inner membrane). The polypeptide is Outer-membrane lipoprotein carrier protein (Methylococcus capsulatus (strain ATCC 33009 / NCIMB 11132 / Bath)).